The sequence spans 320 residues: tRNA-cytidine(32) 2-sulfurtransferase (320 aa).

A PP-loop motif motif is present at residues 54 to 59 (SGGKDS). Residues C129, C132, and C220 each coordinate [4Fe-4S] cluster.

It belongs to the TtcA family. As to quaternary structure, homodimer. Mg(2+) is required as a cofactor. It depends on [4Fe-4S] cluster as a cofactor.

The protein resides in the cytoplasm. The enzyme catalyses cytidine(32) in tRNA + S-sulfanyl-L-cysteinyl-[cysteine desulfurase] + AH2 + ATP = 2-thiocytidine(32) in tRNA + L-cysteinyl-[cysteine desulfurase] + A + AMP + diphosphate + H(+). The protein operates within tRNA modification. Functionally, catalyzes the ATP-dependent 2-thiolation of cytidine in position 32 of tRNA, to form 2-thiocytidine (s(2)C32). The sulfur atoms are provided by the cysteine/cysteine desulfurase (IscS) system. The chain is tRNA-cytidine(32) 2-sulfurtransferase from Bordetella parapertussis (strain 12822 / ATCC BAA-587 / NCTC 13253).